Reading from the N-terminus, the 277-residue chain is Large ribosomal subunit protein uL2 (277 aa).

Disordered regions lie at residues 37-60 (KNSTAGRNSNGHITTRHKGGGHKH) and 223-265 (VVMN…KRTD). Polar residues predominate over residues 39-49 (STAGRNSNGHI). Residues 50–60 (TTRHKGGGHKH) are compositionally biased toward basic residues. Residues 229-244 (DHPHGGGEGRTGEARE) show a composition bias toward basic and acidic residues.

Belongs to the universal ribosomal protein uL2 family. Part of the 50S ribosomal subunit. Forms a bridge to the 30S subunit in the 70S ribosome.

Its function is as follows. One of the primary rRNA binding proteins. Required for association of the 30S and 50S subunits to form the 70S ribosome, for tRNA binding and peptide bond formation. It has been suggested to have peptidyltransferase activity; this is somewhat controversial. Makes several contacts with the 16S rRNA in the 70S ribosome. This Neisseria meningitidis serogroup C (strain 053442) protein is Large ribosomal subunit protein uL2.